The sequence spans 253 residues: CD151 antigen (253 aa).

Residues 1–18 (MGEFNEKKTTCGTVCLKY) are Cytoplasmic-facing. 2 S-palmitoyl cysteine lipidation sites follow: cysteine 11 and cysteine 15. Residues 19–39 (LLFTYNCCFWLAGLAVMAVGI) form a helical membrane-spanning segment. At 40-57 (WTLALKSDYISLLASGTY) the chain is on the extracellular side. The helical transmembrane segment at 58–78 (LATAYILVVAGTVVMVTGVLG) threads the bilayer. The Cytoplasmic segment spans residues 79-91 (CCATFKERRNLLR). A helical transmembrane segment spans residues 92 to 112 (LYFILLLIIFLLEIIAGILAY). Residues 113–221 (AYYQQLNTEL…LETFIQEHLR (109 aa)) lie on the Extracellular side of the membrane. Asparagine 159 carries N-linked (GlcNAc...) asparagine glycosylation. A helical membrane pass occupies residues 222 to 242 (VIGAVGIGIACVQVFGMIFTC). S-palmitoyl cysteine attachment occurs at residues cysteine 242 and cysteine 243. Residues 243–253 (CLYRSLKLEHY) are Cytoplasmic-facing.

This sequence belongs to the tetraspanin (TM4SF) family. Interacts with integrins ITGA3:ITGB1, ITGA5:ITGB1, ITGA3:ITGB1 and ITGA6:ITGB4 and with CD9 and CD181. Interacts (via the second extracellular domain) with integrin ITGAV:ITGB3. Interacts with ITGA3; this interaction modulates ITGA3 glycosylation pattern. Interacts with F11R. Interacts with RAC1 and CDC42; these interactions mediate physical association of RAC1 and CDC42 with integrin adhesion receptor complexes. In terms of processing, palmitoylated. Palmitoylation by ZDHHC2 regulates CD151 expression, association with other tetraspanin family proteins and function in cell adhesion. Post-translationally, ubiquitinated by RNF128 on lysine residues present in the tetraspanin amino terminus via 'Lys-48'-linked ubiquitin leading to proteasomal degradation. As to expression, expressed in a variety of tissues including vascular endothelium and epidermis. Expressed on erythroid cells, with a higher level of expression in erythroid precursors than on mature erythrocytes. Acts as a sensitive T-cell activation marker.

The protein localises to the cell membrane. Its function is as follows. Structural component of specialized membrane microdomains known as tetraspanin-enriched microdomains (TERMs), which act as platforms for receptor clustering and signaling. Plays a role in various cellular and molecular mechanism through its association with both integrin and non-integrin proteins. These interactions facilitate critical cellular functions, including cell-to-cell communication, wound healing, platelet aggregation, trafficking, cell motility, and angiogenesis. Via interaction with JAM-A/F11R and integrin ITGA3:ITGB1, promotes the recruitment of signaling molecules such as RAC1, CDC42 and RhoGTPases to facilitate the polarization of epithelial cells and the reorganization of the actin cytoskeleton, which are critical steps in cell migration process. Regulates the glycosylation pattern of ITGA3:ITGB1 thereby modulating its activity. Plays an essential role in the maintenance of central laminin-binding integrin ITGA6:ITGB4-containing adhesion complexes. Essential for the proper assembly of the glomerular and tubular basement membranes in kidney. Contributes to T-cell activation by modulating integrin signaling leading to activation of downstream targets PTK2 and MAPK1/MAPK3. In terms of biological role, (Microbial infection) Plays a role in human papillomavirus 16/HPV-16 endocytosis upon binding to cell surface receptor. Functionally, (Microbial infection) Plays a role in human cytomegalovirus entry into host cell by contributing to entry receptor binding, membrane fusion, or release of the capsid. This Homo sapiens (Human) protein is CD151 antigen (CD151).